Reading from the N-terminus, the 350-residue chain is Phosphotriesterase-related protein (350 aa).

6 residues coordinate a divalent metal cation: His-24, His-26, Glu-170, His-202, His-231, and Asp-299.

This sequence belongs to the metallo-dependent hydrolases superfamily. Phosphotriesterase family. It depends on a divalent metal cation as a cofactor.

The protein is Phosphotriesterase-related protein of Nematostella vectensis (Starlet sea anemone).